A 498-amino-acid polypeptide reads, in one-letter code: Glycerol kinase (498 aa).

Position 12 (T12) interacts with ADP. Residues T12, T13, and S14 each coordinate ATP. T12 lines the sn-glycerol 3-phosphate pocket. Residue R16 coordinates ADP. Sn-glycerol 3-phosphate is bound by residues R82, E83, Y134, and D243. Residues R82, E83, Y134, D243, and Q244 each contribute to the glycerol site. T265 and G308 together coordinate ADP. 4 residues coordinate ATP: T265, G308, Q312, and G409. Residues G409 and N413 each coordinate ADP.

This sequence belongs to the FGGY kinase family.

The enzyme catalyses glycerol + ATP = sn-glycerol 3-phosphate + ADP + H(+). It participates in polyol metabolism; glycerol degradation via glycerol kinase pathway; sn-glycerol 3-phosphate from glycerol: step 1/1. Inhibited by fructose 1,6-bisphosphate (FBP). Its function is as follows. Key enzyme in the regulation of glycerol uptake and metabolism. Catalyzes the phosphorylation of glycerol to yield sn-glycerol 3-phosphate. The sequence is that of Glycerol kinase from Petrotoga mobilis (strain DSM 10674 / SJ95).